A 324-amino-acid polypeptide reads, in one-letter code: Beta-ketoacyl-[acyl-carrier-protein] synthase III (324 aa).

Catalysis depends on residues cysteine 111 and histidine 251. Residues 252 to 256 form an ACP-binding region; the sequence is QANTR. Residue asparagine 281 is part of the active site.

The protein belongs to the thiolase-like superfamily. FabH family. As to quaternary structure, homodimer.

Its subcellular location is the plastid. It localises to the chloroplast. It carries out the reaction malonyl-[ACP] + acetyl-CoA + H(+) = 3-oxobutanoyl-[ACP] + CO2 + CoA. Its pathway is lipid metabolism; fatty acid biosynthesis. Catalyzes the condensation reaction of fatty acid synthesis by the addition to an acyl acceptor of two carbons from malonyl-ACP. Catalyzes the first condensation reaction which initiates fatty acid synthesis and may therefore play a role in governing the total rate of fatty acid production. Possesses both acetoacetyl-ACP synthase and acetyl transacylase activities. Its substrate specificity determines the biosynthesis of branched-chain and/or straight-chain of fatty acids. The polypeptide is Beta-ketoacyl-[acyl-carrier-protein] synthase III (Pyropia yezoensis (Susabi-nori)).